A 413-amino-acid chain; its full sequence is 2,3-diketo-5-methylthiopentyl-1-phosphate enolase (413 aa).

The active-site Proton acceptor is Lys98. Residues Lys147, 173–176 (KDDE), His264, Gly337, and 359–360 (GG) contribute to the substrate site. Mg(2+) contacts are provided by Lys173, Asp175, and Glu176. Lys173 is subject to N6-carboxylysine.

This sequence belongs to the RuBisCO large chain family. Type IV subfamily. As to quaternary structure, homodimer. Requires Mg(2+) as cofactor.

The catalysed reaction is 5-methylsulfanyl-2,3-dioxopentyl phosphate = 2-hydroxy-5-methylsulfanyl-3-oxopent-1-enyl phosphate. It participates in amino-acid biosynthesis; L-methionine biosynthesis via salvage pathway; L-methionine from S-methyl-5-thio-alpha-D-ribose 1-phosphate: step 3/6. Catalyzes the enolization of 2,3-diketo-5-methylthiopentyl-1-phosphate (DK-MTP-1-P) into 2-hydroxy-3-keto-5-methylthiopentenyl-1-phosphate (HK-MTPenyl-1-P). This Geobacillus thermodenitrificans (strain NG80-2) protein is 2,3-diketo-5-methylthiopentyl-1-phosphate enolase.